Reading from the N-terminus, the 77-residue chain is Small ribosomal subunit protein bS18 (77 aa).

This sequence belongs to the bacterial ribosomal protein bS18 family. Part of the 30S ribosomal subunit. Forms a tight heterodimer with protein bS6.

Its function is as follows. Binds as a heterodimer with protein bS6 to the central domain of the 16S rRNA, where it helps stabilize the platform of the 30S subunit. The protein is Small ribosomal subunit protein bS18 of Desulforamulus reducens (strain ATCC BAA-1160 / DSM 100696 / MI-1) (Desulfotomaculum reducens).